The chain runs to 60 residues: Cytotoxin 5 (60 aa).

4 cysteine pairs are disulfide-bonded: Cys-3–Cys-21, Cys-14–Cys-38, Cys-42–Cys-53, and Cys-54–Cys-59.

It belongs to the three-finger toxin family. Short-chain subfamily. Type IA cytotoxin sub-subfamily. As to quaternary structure, monomer in solution; Homodimer and oligomer in the presence of negatively charged lipids forming a pore with a size ranging between 20 and 30 Angstroms. In terms of tissue distribution, expressed by the venom gland.

It is found in the secreted. It localises to the target cell membrane. Shows cytolytic activity on many different cells by forming pore in lipid membranes. In vivo, increases heart rate or kills the animal by cardiac arrest. In addition, it binds to heparin with high affinity, interacts with Kv channel-interacting protein 1 (KCNIP1) in a calcium-independent manner, and binds to integrin alpha-V/beta-3 (ITGAV/ITGB3) with moderate affinity. The sequence is that of Cytotoxin 5 from Naja haje haje (Egyptian cobra).